The chain runs to 321 residues: Gap junction delta-2 protein (321 aa).

Over 1 to 19 (MGEWTILERLLEAAVQQHS) the chain is Cytoplasmic. The helical transmembrane segment at 20–42 (TMIGRILLTVVVIFRILIVAIVG) threads the bilayer. The Extracellular portion of the chain corresponds to 43–75 (ETVYDDEQTMFVCNTLQPGCNQACYDRAFPISH). Residues 76 to 98 (IRYWVFQIIMVCTPSLCFITYSV) traverse the membrane as a helical segment. Residues 99-197 (HQSAKQRERR…KLRRQEGISR (99 aa)) are Cytoplasmic-facing. Positions 120 to 141 (PAESIGGPGGTGGGGSGGSKRE) are disordered. The segment covering 125–137 (GGPGGTGGGGSGG) has biased composition (gly residues). The chain crosses the membrane as a helical span at residues 198 to 220 (FYIIQVVFRNALEIGFLVGQYFL). Residues 221 to 252 (YGFSVPGLYECNRYPCIKEVECYVSRPTEKTV) are Extracellular-facing. A helical membrane pass occupies residues 253-275 (FLVFMFAVSGICVVLNLAELNHL). Residues 276–321 (GWRKIKLAVRGAQAKRKSVYEIRNKDLPRVSVPNFGRTQSSDSAYV) are Cytoplasmic-facing.

This sequence belongs to the connexin family. Delta-type subfamily. In terms of assembly, a connexon is composed of a hexamer of connexins. As to expression, highly expressed in neurons.

It is found in the cell membrane. The protein resides in the cell junction. Its subcellular location is the gap junction. Functionally, one gap junction consists of a cluster of closely packed pairs of transmembrane channels, the connexons, through which materials of low MW diffuse from one cell to a neighboring cell. In Mus musculus (Mouse), this protein is Gap junction delta-2 protein (Gjd2).